Reading from the N-terminus, the 76-residue chain is MTDVETTYADFIASGRTGRRNAIHDILVSSASGNSNELALKLAGLDINKTEGEEDAQRNSTEQSGEAQGEAAKSES.

T2 carries the post-translational modification N-acetylthreonine. Positions 49-76 (KTEGEEDAQRNSTEQSGEAQGEAAKSES) are disordered.

This sequence belongs to the PKI family.

In terms of biological role, extremely potent competitive inhibitor of cAMP-dependent protein kinase activity, this protein interacts with the catalytic subunit of the enzyme after the cAMP-induced dissociation of its regulatory chains. The chain is cAMP-dependent protein kinase inhibitor alpha (PKIA) from Bos taurus (Bovine).